A 347-amino-acid chain; its full sequence is NHL repeat-containing protein 3 (347 aa).

Positions 1–25 are cleaved as a signal peptide; it reads MARFWVCVAGAGFFLAFLVLHSRFC. N32 carries N-linked (GlcNAc...) asparagine glycosylation. The stretch at 47–93 is one NHL 1 repeat; sequence RLDVGWPKHPEYFTGTTFCVAVDSLNGLVYIGQRGDNIPKILVFTED. N-linked (GlcNAc...) asparagine glycosylation occurs at N101. NHL repeat units follow at residues 150–196 and 200–243; these read TPGK…LSQD and LWLH…FDKD. N-linked (GlcNAc...) asparagine glycans are attached at residues N206 and N278. The stretch at 294–338 is one NHL 4 repeat; sequence GECSVISTIQLADQVLPHLLEVDRKTGAVYVAEIGAKQVQKYVPL.

The protein resides in the secreted. This chain is NHL repeat-containing protein 3 (NHLRC3), found in Homo sapiens (Human).